The following is a 1404-amino-acid chain: DNA-directed RNA polymerase subunit beta' (1404 aa).

The Zn(2+) site is built by cysteine 60, cysteine 62, cysteine 75, and cysteine 78. Aspartate 449, aspartate 451, and aspartate 453 together coordinate Mg(2+). Residues cysteine 778, cysteine 852, cysteine 859, and cysteine 862 each contribute to the Zn(2+) site. Residues 1380–1404 (LDRPLEEEEEEEIPQAIAEESDAEE) form a disordered region. Residues 1384–1404 (LEEEEEEEIPQAIAEESDAEE) are compositionally biased toward acidic residues.

This sequence belongs to the RNA polymerase beta' chain family. In terms of assembly, the RNAP catalytic core consists of 2 alpha, 1 beta, 1 beta' and 1 omega subunit. When a sigma factor is associated with the core the holoenzyme is formed, which can initiate transcription. It depends on Mg(2+) as a cofactor. The cofactor is Zn(2+).

It carries out the reaction RNA(n) + a ribonucleoside 5'-triphosphate = RNA(n+1) + diphosphate. DNA-dependent RNA polymerase catalyzes the transcription of DNA into RNA using the four ribonucleoside triphosphates as substrates. The chain is DNA-directed RNA polymerase subunit beta' from Leptospira interrogans serogroup Icterohaemorrhagiae serovar Lai (strain 56601).